A 51-amino-acid chain; its full sequence is Ribosome biogenesis protein Nop10 (51 aa).

This sequence belongs to the NOP10 family.

Functionally, involved in ribosome biogenesis; more specifically in 18S rRNA pseudouridylation and in cleavage of pre-rRNA. The chain is Ribosome biogenesis protein Nop10 from Nitrosopumilus maritimus (strain SCM1).